An 848-amino-acid polypeptide reads, in one-letter code: DNA mismatch repair protein MutS (848 aa).

605-612 (GPNMAGKS) provides a ligand contact to ATP.

This sequence belongs to the DNA mismatch repair MutS family.

This protein is involved in the repair of mismatches in DNA. It is possible that it carries out the mismatch recognition step. This protein has a weak ATPase activity. The sequence is that of DNA mismatch repair protein MutS from Leptospira interrogans serogroup Icterohaemorrhagiae serovar Lai (strain 56601).